The chain runs to 1706 residues: Serine/threonine-protein kinase vps15 (1706 aa).

The region spanning 24–293 is the Protein kinase domain; that stretch reads YHNERSLGDS…YLQKYRGTVF (270 aa). Residues 30 to 38 and K52 contribute to the ATP site; that span reads LGDSHFLRT. One copy of the HEAT 1 repeat lies at 56–94; that stretch reads NKLPEISLSSIVNLLKEEQENISYRVPNAVPYIKTLVTL. The Proton acceptor role is filled by D146. HEAT repeat units follow at residues 426 to 465, 466 to 504, 511 to 549, 587 to 625, 626 to 664, 665 to 703, and 705 to 743; these read LYGA…NICD, ESKL…NVTS, FLFQ…QASK, HDLV…FFGK, AKSN…FIGP, RSVD…LHLF, and KLVV…SFDD. S957 bears the Phosphoserine mark. At Y958 the chain carries Phosphotyrosine. The segment at 982-1099 is disordered; the sequence is TTKPKDVSQS…GKSLAPLISS (118 aa). 2 stretches are compositionally biased toward basic and acidic residues: residues 984-1002 and 1014-1023; these read KPKD…RESN and DVYRQTDNPE. Residues 1029–1055 show a composition bias toward polar residues; it reads DTASSKVDTHNPTVTQPTDDTGGLNSY. Residues 1056-1069 show a composition bias toward low complexity; it reads NTENPLLTNNTLEP. Residues 1079 to 1090 show a composition bias toward basic and acidic residues; the sequence is KDSDKHAKESKG. WD repeat units follow at residues 1213–1252 and 1368–1407; these read LLDG…RHIS and LQCG…LSCS. Polar residues predominate over residues 1431–1442; that stretch reads NEYTSGNNNSPV. Residues 1431–1461 form a disordered region; sequence NEYTSGNNNSPVTKVPGSSSTSSSSTQPINS. The stretch at 1577–1622 is one WD 3 repeat; it reads CISSPIYRYRGPSAGSVEREPLFLIAASGSPHAFIWNPHNVSASSS.

This sequence belongs to the protein kinase superfamily. Ser/Thr protein kinase family. In terms of assembly, component of the autophagy-specific vps34 PI3-kinase complex I composed of vps15, atg6, pik3/vps34, atg14 and atg38. Also a component of the vps34 PI3-kinase complex II composed of atg6, pik3, vps15 and vps38.

The catalysed reaction is L-seryl-[protein] + ATP = O-phospho-L-seryl-[protein] + ADP + H(+). It carries out the reaction L-threonyl-[protein] + ATP = O-phospho-L-threonyl-[protein] + ADP + H(+). Its function is as follows. Functions as a part of the autophagy-specific VPS34 PI3-kinase complex I that plays a role in autophagosome assembly. This complex is essential to recruit the atg8-phosphatidylinositol conjugate and the atg12-atg5 conjugate to the pre-autophagosomal structure. Also functions as part of the VPS34 PI3-kinase complex II. This chain is Serine/threonine-protein kinase vps15, found in Schizosaccharomyces pombe (strain 972 / ATCC 24843) (Fission yeast).